Consider the following 364-residue polypeptide: DNA polymerase IV (364 aa).

The UmuC domain occupies 14 to 198 (IIHIDMDAFF…LPIEKFHGVG (185 aa)). 2 residues coordinate Mg(2+): aspartate 18 and aspartate 116. Glutamate 117 is a catalytic residue.

This sequence belongs to the DNA polymerase type-Y family. In terms of assembly, monomer. Mg(2+) serves as cofactor.

It is found in the cytoplasm. The enzyme catalyses DNA(n) + a 2'-deoxyribonucleoside 5'-triphosphate = DNA(n+1) + diphosphate. Poorly processive, error-prone DNA polymerase involved in untargeted mutagenesis. Copies undamaged DNA at stalled replication forks, which arise in vivo from mismatched or misaligned primer ends. These misaligned primers can be extended by PolIV. Exhibits no 3'-5' exonuclease (proofreading) activity. May be involved in translesional synthesis, in conjunction with the beta clamp from PolIII. This chain is DNA polymerase IV, found in Streptococcus pyogenes serotype M18 (strain MGAS8232).